The sequence spans 331 residues: tRNA-modifying protein YgfZ (331 aa).

The folate site is built by W28 and W191.

This sequence belongs to the tRNA-modifying YgfZ family.

It localises to the cytoplasm. In terms of biological role, folate-binding protein involved in regulating the level of ATP-DnaA and in the modification of some tRNAs. It is probably a key factor in regulatory networks that act via tRNA modification, such as initiation of chromosomal replication. This chain is tRNA-modifying protein YgfZ, found in Edwardsiella ictaluri (strain 93-146).